The sequence spans 125 residues: uncharacterized protein (125 aa).

Helical transmembrane passes span 20 to 42, 57 to 76, and 81 to 103; these read RNGG…LTIL, LMNA…GVVV, and YLFV…YMAS.

It is found in the cell membrane. This is an uncharacterized protein from Archaeoglobus fulgidus (strain ATCC 49558 / DSM 4304 / JCM 9628 / NBRC 100126 / VC-16).